The chain runs to 131 residues: Small ribosomal subunit protein uS11 (131 aa).

The protein belongs to the universal ribosomal protein uS11 family. In terms of assembly, part of the 30S ribosomal subunit. Interacts with proteins S7 and S18. Binds to IF-3.

Its function is as follows. Located on the platform of the 30S subunit, it bridges several disparate RNA helices of the 16S rRNA. Forms part of the Shine-Dalgarno cleft in the 70S ribosome. This Deinococcus radiodurans (strain ATCC 13939 / DSM 20539 / JCM 16871 / CCUG 27074 / LMG 4051 / NBRC 15346 / NCIMB 9279 / VKM B-1422 / R1) protein is Small ribosomal subunit protein uS11.